Here is a 185-residue protein sequence, read N- to C-terminus: Large ribosomal subunit protein uL30 (185 aa).

The protein belongs to the universal ribosomal protein uL30 family. Part of the 50S ribosomal subunit.

The protein is Large ribosomal subunit protein uL30 of Caldivirga maquilingensis (strain ATCC 700844 / DSM 13496 / JCM 10307 / IC-167).